The chain runs to 419 residues: D-amino acid dehydrogenase (419 aa).

3-17 (VLILGGGVVGVTSAY) lines the FAD pocket.

The protein belongs to the DadA oxidoreductase family. Requires FAD as cofactor.

It carries out the reaction a D-alpha-amino acid + A + H2O = a 2-oxocarboxylate + AH2 + NH4(+). Its pathway is amino-acid degradation; D-alanine degradation; NH(3) and pyruvate from D-alanine: step 1/1. Functionally, oxidative deamination of D-amino acids. This is D-amino acid dehydrogenase from Methylobacterium radiotolerans (strain ATCC 27329 / DSM 1819 / JCM 2831 / NBRC 15690 / NCIMB 10815 / 0-1).